The following is a 246-amino-acid chain: Pyridoxine 5'-phosphate synthase (246 aa).

Asn-12 is a 3-amino-2-oxopropyl phosphate binding site. 14 to 15 (DH) contributes to the 1-deoxy-D-xylulose 5-phosphate binding site. Arg-23 serves as a coordination point for 3-amino-2-oxopropyl phosphate. The active-site Proton acceptor is His-48. Residues Arg-50 and His-55 each coordinate 1-deoxy-D-xylulose 5-phosphate. Catalysis depends on Glu-75, which acts as the Proton acceptor. Thr-105 provides a ligand contact to 1-deoxy-D-xylulose 5-phosphate. His-196 acts as the Proton donor in catalysis. 3-amino-2-oxopropyl phosphate-binding positions include Gly-197 and 218–219 (GH).

This sequence belongs to the PNP synthase family. Homooctamer; tetramer of dimers.

It is found in the cytoplasm. The enzyme catalyses 3-amino-2-oxopropyl phosphate + 1-deoxy-D-xylulose 5-phosphate = pyridoxine 5'-phosphate + phosphate + 2 H2O + H(+). Its pathway is cofactor biosynthesis; pyridoxine 5'-phosphate biosynthesis; pyridoxine 5'-phosphate from D-erythrose 4-phosphate: step 5/5. In terms of biological role, catalyzes the complicated ring closure reaction between the two acyclic compounds 1-deoxy-D-xylulose-5-phosphate (DXP) and 3-amino-2-oxopropyl phosphate (1-amino-acetone-3-phosphate or AAP) to form pyridoxine 5'-phosphate (PNP) and inorganic phosphate. This is Pyridoxine 5'-phosphate synthase from Thioalkalivibrio sulfidiphilus (strain HL-EbGR7).